The sequence spans 236 residues: tRNA (guanine-N(7)-)-methyltransferase (236 aa).

The S-adenosyl-L-methionine site is built by Asp-35, Glu-60, Asn-87, and Asp-113. Asp-113 is an active-site residue. Lys-117 and Asp-149 together coordinate substrate.

The protein belongs to the class I-like SAM-binding methyltransferase superfamily. TrmB family.

It catalyses the reaction guanosine(46) in tRNA + S-adenosyl-L-methionine = N(7)-methylguanosine(46) in tRNA + S-adenosyl-L-homocysteine. The protein operates within tRNA modification; N(7)-methylguanine-tRNA biosynthesis. Its function is as follows. Catalyzes the formation of N(7)-methylguanine at position 46 (m7G46) in tRNA. This chain is tRNA (guanine-N(7)-)-methyltransferase, found in Parasynechococcus marenigrum (strain WH8102).